The following is a 357-amino-acid chain: Trans-enoyl reductase resD (357 aa).

Residue Y211 coordinates NADP(+).

The protein belongs to the zinc-containing alcohol dehydrogenase family.

Its pathway is antifungal biosynthesis. Trans-enoyl reductase; part of the gene cluster that mediates the biosynthesis of the tetrahydropyranyl antifungal agent restricticin that acts as an inhibitor of CYP51 and blocks the ergosterol biosynthesis. The highly reducing polyketide synthase resH, the short chain dehydrogenase resG, the cyclase resF, the FAD-dependent monooxygenase resA and the enoylreductase resD are required to generate the first stable intermediate desmethylrestrictinol. ResH with resD biosynthesize the first polyketide chain intermediate that is reduced by resG, followed by epoxidation by resA before 6-endo cyclization via epoxide opening by resF leads to desmethylrestrictinol. The methyltransferase resE then catalyzes the C4 O-methylation of desmethylrestrictinol to produce restrictinol, and the nonribosomal peptide synthetase resC catalyzes the C3 esterification of restrictinol with glycine that leads to restricticin. The chain is Trans-enoyl reductase resD from Aspergillus sclerotiorum.